Here is a 555-residue protein sequence, read N- to C-terminus: MLFTASLLLLLPWASAAPANLPIVDLGYQRHQAISFNSTGQYYSFTNIRYAEPPLGSRRFAPPVAPHGRSKNIVNGTGLGYKCPQALACWFNVQNKFTSAAAAGTPFDFNAAYEEVYTKDACTEPAKQDPLQSEDCLFLDVYVPQDVWQKGPQAAHQKGGAPVLVYLQDGAYVGGSKSDQNPAGLIARSREEGSSGMIYVGINYRLGVFGWLSGRKFTSSGGKPNAGLLDQRLALEWIQRHIHLFGGDPSRVTVMGVSAGGGSIIMQMTAYGRGISPPFAQVITQSPAWEPGTKTPAIEDDLFDTFLASLNVTSLDQARRLPSHALTDANYRLVASRPYGAGVLGPAIDGDFIPDSPKRLLLQGKANPGVRVLTSYTAAEGFGIAPANITDEASFQRYVGLMLAGTDASVRTHAATVLYPAVFDGSMPYRTQHDRASLLWADLAASCNTRYLHAAVRTPGYAIEYSVPPALHLSDTPSVFYNGPVADPTVNGTIAELLQRQIVRFVKTGNPNGEPDPEVPVYDGRDLLDLGDDGVLVRPDSTDNARCEYWQKVHF.

An N-terminal signal peptide occupies residues Met-1 to Ala-16. Asn-37 and Asn-75 each carry an N-linked (GlcNAc...) asparagine glycan. Catalysis depends on Ser-258, which acts as the Acyl-ester intermediate. Ser-258 is a binding site for substrate. Asn-311 carries an N-linked (GlcNAc...) asparagine glycan. Glu-380 serves as the catalytic Charge relay system. 2 N-linked (GlcNAc...) asparagine glycosylation sites follow: Asn-388 and Asn-491.

The protein belongs to the type-B carboxylesterase/lipase family.

The protein localises to the cytoplasm. It localises to the cytosol. It carries out the reaction a carboxylic ester + H2O = an alcohol + a carboxylate + H(+). It functions in the pathway mycotoxin biosynthesis; patulin biosynthesis. Functionally, carboxylesterase; part of the gene cluster that mediates the biosynthesis of patulin, an acetate-derived tetraketide mycotoxin produced by several fungal species that shows antimicrobial properties against several bacteria. The function of patB in patulin synthesis has still to be characterized. The pathway begins with the synthesis of 6-methylsalicylic acid by the polyketide synthase (PKS) patK via condensation of acetate and malonate units. The 6-methylsalicylic acid decarboxylase patG then catalyzes the decarboxylation of 6-methylsalicylic acid to yield m-cresol (also known as 3-methylphenol). These first reactions occur in the cytosol. The intermediate m-cresol is then transported into the endoplasmic reticulum where the cytochrome P450 monooxygenase patH converts it to m-hydroxybenzyl alcohol, which is further converted to gentisyl alcohol by the cytochrome P450 monooxygenase patI. The oxidoreductases patJ and patO further convert gentisyl alcohol to isoepoxydon in the vacuole. PatN catalyzes then the transformation of isoepoxydon into phyllostine. The cluster protein patF is responsible for the conversion from phyllostine to neopatulin whereas the alcohol dehydrogenase patD converts neopatulin to E-ascladiol. The steps between isoepoxydon and E-ascladiol occur in the cytosol, and E-ascladiol is probably secreted to the extracellular space by one of the cluster-specific transporters patC or patM. Finally, the secreted patulin synthase patE catalyzes the conversion of E-ascladiol to patulin. This Aspergillus clavatus (strain ATCC 1007 / CBS 513.65 / DSM 816 / NCTC 3887 / NRRL 1 / QM 1276 / 107) protein is Carboxylesterase patB.